Reading from the N-terminus, the 593-residue chain is ETS-related transcription factor Elf-2 (593 aa).

The disordered stretch occupies residues 1-34 (MASAVVDSGGSALELPSDGGENQEGGDTGPDCPA). Residue Ser107 is modified to Phosphoserine. Positions 146–199 (VEVSTEESEPMDASPIPTSPDSHEPMKKKKVGRKPKTQQSPVSNGSPELGIKKK) are disordered. The span at 171–181 (MKKKKVGRKPK) shows a compositional bias: basic residues. Residue Thr182 is modified to Phosphothreonine. Polar residues predominate over residues 182 to 191 (TQQSPVSNGS). 2 positions are modified to phosphoserine: Ser185 and Ser191. Residues 208–290 (TYLWEFLLDL…EGQRLVYQFK (83 aa)) constitute a DNA-binding region (ETS). The tract at residues 362–383 (TSPTHDGSSRSPTTTAPVSAAA) is disordered. Phosphoserine is present on residues Ser363 and Ser372. Residues 370–383 (SRSPTTTAPVSAAA) are compositionally biased toward low complexity. Thr376 carries the phosphothreonine modification. Ser432 bears the Phosphoserine mark. Arg496 carries the omega-N-methylarginine modification. Phosphothreonine is present on Thr523. Residue Lys538 forms a Glycyl lysine isopeptide (Lys-Gly) (interchain with G-Cter in SUMO2) linkage.

The protein belongs to the ETS family. As to quaternary structure, interacts with LIM domains of LMO2. Interacts via its N-terminal region with RUNX1. In terms of tissue distribution, expressed in all tissues examined. Highest levels in thymocytes and bone marrow.

Its subcellular location is the nucleus. In terms of biological role, probably transcriptionally activates the LYN and BLK promoters and acts synergistically with RUNX1 to transactivate the BLK promoter. This Mus musculus (Mouse) protein is ETS-related transcription factor Elf-2.